Consider the following 612-residue polypeptide: 2-isopropylmalate synthase B (612 aa).

The Pyruvate carboxyltransferase domain occupies 71–344 (VRIFDTTLRD…YTGINTQHIL (274 aa)). Positions 80, 277, and 313 each coordinate a divalent metal cation.

It belongs to the alpha-IPM synthase/homocitrate synthase family. LeuA type 1 subfamily. As to quaternary structure, homodimer. Requires a divalent metal cation as cofactor.

The catalysed reaction is 3-methyl-2-oxobutanoate + acetyl-CoA + H2O = (2S)-2-isopropylmalate + CoA + H(+). Its pathway is amino-acid biosynthesis; L-leucine biosynthesis; L-leucine from 3-methyl-2-oxobutanoate: step 1/4. Catalyzes the condensation of the acetyl group of acetyl-CoA with 3-methyl-2-oxobutanoate (2-oxoisovalerate) to form 3-carboxy-3-hydroxy-4-methylpentanoate (2-isopropylmalate). The polypeptide is 2-isopropylmalate synthase B (IPMSB) (Solanum pennellii (Tomato)).